Consider the following 78-residue polypeptide: Conotoxin TsMSGL-13 (78 aa).

The first 24 residues, 1-24 (MSGLGIMVLTLLLFMFMATSHQDA), serve as a signal peptide directing secretion. Positions 25-44 (GEKQATQRDAINVRRRRSIT) are excised as a propeptide. Disulfide bonds link Cys-51–Cys-63, Cys-55–Cys-72, and Cys-62–Cys-76. Phe-77 carries the post-translational modification Phenylalanine amide.

The protein belongs to the conotoxin O3 superfamily. As to expression, expressed by the venom duct.

It localises to the secreted. This is Conotoxin TsMSGL-13 from Conus tessulatus (Tessellate cone).